The following is a 568-amino-acid chain: Potassium-transporting ATPase potassium-binding subunit (568 aa).

10 helical membrane-spanning segments follow: residues 7–27, 65–85, 135–155, 177–197, 254–274, 286–306, 383–403, 422–442, 489–509, and 530–550; these read AEIA…GLFL, SYAL…YAIL, AGLT…AAAV, VSLY…VALG, LTNL…VVAF, ALIT…YWTE, GLYG…LMVG, MLAV…AAVL, LGIA…AIAG, and LFIG…FFPA.

It belongs to the KdpA family. In terms of assembly, the system is composed of three essential subunits: KdpA, KdpB and KdpC.

Its subcellular location is the cell inner membrane. Functionally, part of the high-affinity ATP-driven potassium transport (or Kdp) system, which catalyzes the hydrolysis of ATP coupled with the electrogenic transport of potassium into the cytoplasm. This subunit binds the periplasmic potassium ions and delivers the ions to the membrane domain of KdpB through an intramembrane tunnel. This Beijerinckia indica subsp. indica (strain ATCC 9039 / DSM 1715 / NCIMB 8712) protein is Potassium-transporting ATPase potassium-binding subunit.